Consider the following 206-residue polypeptide: Pyridoxine/pyridoxamine 5'-phosphate oxidase (206 aa).

Residues 49-54 (RMVLLK), 69-70 (YT), lysine 76, and glutamine 98 each bind FMN. Lysine 54 is a substrate binding site. 3 residues coordinate substrate: tyrosine 116, arginine 120, and serine 124. Residues 133–134 (QS) and tryptophan 177 each bind FMN. Residue 183 to 185 (RLH) coordinates substrate. Arginine 187 is a binding site for FMN.

The protein belongs to the pyridoxamine 5'-phosphate oxidase family. Homodimer. It depends on FMN as a cofactor.

It carries out the reaction pyridoxamine 5'-phosphate + O2 + H2O = pyridoxal 5'-phosphate + H2O2 + NH4(+). The catalysed reaction is pyridoxine 5'-phosphate + O2 = pyridoxal 5'-phosphate + H2O2. It functions in the pathway cofactor metabolism; pyridoxal 5'-phosphate salvage; pyridoxal 5'-phosphate from pyridoxamine 5'-phosphate: step 1/1. Its pathway is cofactor metabolism; pyridoxal 5'-phosphate salvage; pyridoxal 5'-phosphate from pyridoxine 5'-phosphate: step 1/1. Catalyzes the oxidation of either pyridoxine 5'-phosphate (PNP) or pyridoxamine 5'-phosphate (PMP) into pyridoxal 5'-phosphate (PLP). The chain is Pyridoxine/pyridoxamine 5'-phosphate oxidase from Jannaschia sp. (strain CCS1).